Reading from the N-terminus, the 113-residue chain is Ribosome-associated factor Y (113 aa).

The residue at position 66 (lysine 66) is an N6-acetyllysine. Residues 91–113 (KGEARRAATSVKDANFVEEVEEE) form a disordered region.

This sequence belongs to the HPF/YfiA ribosome-associated protein family. YfiA subfamily. In terms of assembly, associates mainly with 70S ribosomes.

Its function is as follows. During stationary phase, prevents 70S dimer formation, probably in order to regulate translation efficiency during transition between the exponential and the stationary phases. In addition, during environmental stress such as cold shock or excessive cell density at stationary phase, stabilizes the 70S ribosome against dissociation, inhibits translation initiation and increase translation accuracy. When normal growth conditions are restored, is quickly released from the ribosome. This Escherichia coli O157:H7 protein is Ribosome-associated factor Y.